The following is a 391-amino-acid chain: Response regulator aspartate phosphatase I (391 aa).

TPR repeat units follow at residues 62–95 (LEFR…EKQG), 150–183 (SYVY…AVQT), 184–217 (VRCQ…SKES), 224–257 (AMSH…FEKS), 275–311 (KQQN…LEGL), and 338–371 (ENFS…RRKI).

It belongs to the Rap family.

Its subcellular location is the cytoplasm. With respect to regulation, inhibited by PhrI. In terms of biological role, activates ICEBs1 gene expression, excision and transfer by inactivating the ICEBs1 repressor protein ImmR. RapI-mediated induction likely results from an increase in the specific activity of the protease ImmA, which mediates proteolysis of ImmR. In addition, is involved in regulation of sporulation. Acts as a phosphatase that specifically dephosphorylates the sporulation initiation phosphotransferase Spo0F and inhibits its activity. The polypeptide is Response regulator aspartate phosphatase I (rapI) (Bacillus subtilis (strain 168)).